The following is a 208-amino-acid chain: Small ribosomal subunit protein uS4 (208 aa).

Positions 98-163 (TRLDNVVFRL…TPLFKEIVDG (66 aa)) constitute an S4 RNA-binding domain.

It belongs to the universal ribosomal protein uS4 family. Part of the 30S ribosomal subunit. Contacts protein S5. The interaction surface between S4 and S5 is involved in control of translational fidelity.

One of the primary rRNA binding proteins, it binds directly to 16S rRNA where it nucleates assembly of the body of the 30S subunit. In terms of biological role, with S5 and S12 plays an important role in translational accuracy. This Heliobacterium modesticaldum (strain ATCC 51547 / Ice1) protein is Small ribosomal subunit protein uS4.